Here is a 685-residue protein sequence, read N- to C-terminus: Iron(3+)-hydroxamate import system permease protein FhuB (685 aa).

The next 18 helical transmembrane spans lie at 35-55 (ALLLLALFVAACWLTWVNFSV), 87-107 (LAISLLVGAGLGLVGVLFQQV), 120-140 (VATGAQLGITVTTLWAIPGAL), 143-163 (QFAALTGACIVGALVFGVAWG), 172-192 (ILAGLVVSLYCGAINQLLVIF), 222-242 (QLLGGVMLTLLLLRPMTLMGL), 265-285 (AIVLSALLVNAVGIIGFIGLF), 302-322 (LMLAPLIGALILWLSDQIILW), 328-348 (MEVSTGSVTALIGAPLLLWLL), 373-393 (LAFAVAGGALLLLATWVALSF), 416-436 (WPRILAALMAGVMLAVAGCII), 456-476 (AAFGVVLMLFLVPGNAFGWLL), 479-499 (GSLGAAATLLIIMIAAGRGGF), 504-524 (MLLAGMALSTAFTMLLMMLQA), 553-573 (AIVMVILLAIVPLCRRWLTIL), 592-612 (IALLALAACLTATATMTIGPL), 632-652 (MPHMVISALAGGVLLVFADWC), and 660-680 (YQIPAGLLSSFIGAPYFIYLL).

Belongs to the binding-protein-dependent transport system permease family. FecCD subfamily. In terms of assembly, the complex is composed of two ATP-binding proteins (FhuC), a transmembrane protein (FhuB) and a solute-binding protein (FhuD).

The protein localises to the cell inner membrane. Part of the ABC transporter complex FhuCDB involved in iron(3+)-hydroxamate import. Responsible for the translocation of the substrate across the membrane. Involved in ferrioxamine-mediated iron(III) utilization. The polypeptide is Iron(3+)-hydroxamate import system permease protein FhuB (fhuB) (Salmonella typhimurium (strain LT2 / SGSC1412 / ATCC 700720)).